The chain runs to 944 residues: MFAWWGRTVYRYRFIVIGVMVALCLGGGVFGLSLGKHVTQSGFYDDGSQSVQASVLGDQVYGRDRSGHIVAIFQAPAGKTVDDPAWSKKVVDELNRFQQDHPDQVLGWAGYLRASQATGMATADKKYTFVSIPLKGDDDDTILNNYKAIAPDLQRLDGGTVKLAGLQPVAEALTGTIATDQRRMEVLALPLVAVVLFFVFGGVIAAGLPVMVGGLCIAGALGIMRFLAIFGPVHYFAQPVVSLIGLGIAIDYGLFIVSRFREEIAEGYDTETAVRRTVITAGRTVTFSAVLIVASAIGLLLFPQGFLKSLTYATIASVMLSAILSITVLPACLGILGKHVDALGVRTLFRVPFLANWKISAAYLNWLADRLQRTKTREEVEAGFWGKLVNRVMKRPVLFAAPIVIIMILLIIPVGKLSLGGISEKYLPPTNSVRQAQEEFDKLFPGYRTNPLTLVIQTSNHQPVTDAQIADIRSKAMAIGGFIEPDNDPANMWQERAYAVGASKDPSVRVLQNGLINPADASKKLTELRAITPPKGITVLVGGTPALELDSIHGLFAKMPLMVVILLTTTIVLMFLAFGSVVLPIKATLMSALTLGSTMGILTWIFVDGHFSKWLNFTPTPLTAPVIGLIIALVFGLSTDYEVFLVSRMVEARERGMSTQEAIRIGTAATGRIITAAALIVAVVAGAFVFSDLVMMKYLAFGLMAALLLDATVVRMFLVPSVMKLLGDDCWWAPRWARRLQTRIGLGEIHLPDERNRPVSNGRPARPPVTAGLVAARAAGDPRPPHDPTHPLAESPRPARSSPASSPELTPALEATAAPAAPSGASTTRMQIGSSTEPPTTRLAAAGRSVQSPASTPPPTPTPPSAPSAGQTRAMPLAANRSTDAAGDPAEPTAALPIIRSDGDDSEAATEQLNARGTSDKTRQRRRGGGALSAQDLLRREGRL.

At 1-13 the chain is on the cytoplasmic side; sequence MFAWWGRTVYRYR. Residues 14-34 form a helical membrane-spanning segment; that stretch reads FIVIGVMVALCLGGGVFGLSL. Over 35–185 the chain is Periplasmic; the sequence is GKHVTQSGFY…TIATDQRRME (151 aa). Position 40 to 44 (40 to 44) interacts with a 1,2-diacylglycero-3-phosphoethanolamine; it reads QSGFY. A helical membrane pass occupies residues 186–206; sequence VLALPLVAVVLFFVFGGVIAA. At 207-209 the chain is on the cytoplasmic side; the sequence is GLP. Residues 210-230 traverse the membrane as a helical segment; the sequence is VMVGGLCIAGALGIMRFLAIF. Residues 231–235 lie on the Periplasmic side of the membrane; the sequence is GPVHY. Residues 236-256 form a helical membrane-spanning segment; the sequence is FAQPVVSLIGLGIAIDYGLFI. Residues 257-286 are Cytoplasmic-facing; that stretch reads VSRFREEIAEGYDTETAVRRTVITAGRTVT. The helical transmembrane segment at 287–307 threads the bilayer; the sequence is FSAVLIVASAIGLLLFPQGFL. Residues 308 to 314 lie on the Periplasmic side of the membrane; that stretch reads KSLTYAT. The chain crosses the membrane as a helical span at residues 315-335; that stretch reads IASVMLSAILSITVLPACLGI. The Cytoplasmic segment spans residues 336-396; sequence LGKHVDALGV…KLVNRVMKRP (61 aa). Residues 397–417 traverse the membrane as a helical segment; it reads VLFAAPIVIIMILLIIPVGKL. At 418–562 the chain is on the periplasmic side; the sequence is SLGGISEKYL…HGLFAKMPLM (145 aa). The helical transmembrane segment at 563 to 583 threads the bilayer; the sequence is VVILLTTTIVLMFLAFGSVVL. The Cytoplasmic portion of the chain corresponds to 584–586; that stretch reads PIK. A helical transmembrane segment spans residues 587–607; sequence ATLMSALTLGSTMGILTWIFV. At 608 to 616 the chain is on the periplasmic side; it reads DGHFSKWLN. A helical membrane pass occupies residues 617–637; that stretch reads FTPTPLTAPVIGLIIALVFGL. Residues 638–672 lie on the Cytoplasmic side of the membrane; that stretch reads STDYEVFLVSRMVEARERGMSTQEAIRIGTAATGR. A helical membrane pass occupies residues 673-693; that stretch reads IITAAALIVAVVAGAFVFSDL. Over 694–698 the chain is Periplasmic; that stretch reads VMMKY. A helical membrane pass occupies residues 699 to 719; sequence LAFGLMAALLLDATVVRMFLV. Residues 720-944 are Cytoplasmic-facing; that stretch reads PSVMKLLGDD…QDLLRREGRL (225 aa). The segment at 778–944 is disordered; that stretch reads AAGDPRPPHD…QDLLRREGRL (167 aa). The segment covering 791–828 has biased composition (low complexity); that stretch reads PLAESPRPARSSPASSPELTPALEATAAPAAPSGASTT. Over residues 829–839 the composition is skewed to polar residues; that stretch reads RMQIGSSTEPP. Pro residues predominate over residues 855 to 866; sequence STPPPTPTPPSA.

Belongs to the resistance-nodulation-cell division (RND) (TC 2.A.6) family. MmpL subfamily. In terms of assembly, monomer. Interacts with TtfA (via N-terminus); active trehalose monomycolate (TMM) biosynthesis is not required for the complex formation.

Its subcellular location is the cell inner membrane. It localises to the cell septum. The protein resides in the cell tip. Functionally, transports trehalose monomycolate (TMM) to the cell wall. Flips TMM across the inner membrane. Membrane potential is not required for this function. Transports probably phosphatidylethanolamine (PE) as well. Binds specifically both TMM and PE, but not trehalose dimycolate (TDM). Also binds diacylglycerol (DAG) and other phospholipids, including phosphatidylglycerol (PG), phosphatidylinositol (PI), and cardiolipin (CDL). Contributes to membrane potential, cell wall composition, antibiotic susceptibility and fitness. Could also be part of a heme-iron acquisition system. In Mycobacterium tuberculosis (strain CDC 1551 / Oshkosh), this protein is Trehalose monomycolate exporter MmpL3 (mmpL3).